The primary structure comprises 156 residues: MNITVLAVGTKMPRWVDEAVAEYAKRFGRDVAYALKEIKPEKRGAGVNAAQGMAAEEKRILEAIPQGAFLVVLDERGKAPTSVELAEHLKSWRQNGEHVCFVIGGADGMTDRLKQQARMMMRLSSLTLPHGMVRVFLTEQLYRAVSILHNHPYHRE.

S-adenosyl-L-methionine is bound by residues leucine 73, glycine 104, and 123–128 (LSSLTL).

Belongs to the RNA methyltransferase RlmH family. As to quaternary structure, homodimer.

Its subcellular location is the cytoplasm. The enzyme catalyses pseudouridine(1915) in 23S rRNA + S-adenosyl-L-methionine = N(3)-methylpseudouridine(1915) in 23S rRNA + S-adenosyl-L-homocysteine + H(+). Its function is as follows. Specifically methylates the pseudouridine at position 1915 (m3Psi1915) in 23S rRNA. In Neisseria meningitidis serogroup A / serotype 4A (strain DSM 15465 / Z2491), this protein is Ribosomal RNA large subunit methyltransferase H.